We begin with the raw amino-acid sequence, 867 residues long: Pentatricopeptide repeat-containing protein At2g39230, mitochondrial (867 aa).

A mitochondrion-targeting transit peptide spans 1–49; the sequence is MTTFMVSKRFRPPIFLHRFINPKPISSQTRFLHPPDNQSRDISDSTTET. Positions 27–74 are disordered; sequence SQTRFLHPPDNQSRDISDSTTETISTLEFPHKTSVPNHSPLTSTSETE. Residues 60–72 show a composition bias toward polar residues; it reads SVPNHSPLTSTSE. 19 PPR repeats span residues 168 to 202, 203 to 237, 238 to 272, 273 to 307, 309 to 343, 344 to 378, 379 to 413, 414 to 444, 448 to 482, 483 to 517, 518 to 552, 553 to 588, 589 to 623, 624 to 658, 659 to 693, 694 to 728, 729 to 763, 764 to 798, and 799 to 833; these read TPRAFNYLLNAYIRNKRMDYAVDCFGLMVDRKVVP, FVPYVNNVLSSLVRSNLIDEAKEIYNKMVLIGVAG, DNVTTQLLMRASLRERKPEEAVKIFRRVMSRGAEP, DGLLFSLAVQAACKTPDLVMALDLLREMRGKLGVP, SQETYTSVIVAFVKEGNMEEAVRVMDEMVGFGIPM, SVIAATSLVNGYCKGNELGKALDLFNRMEEEGLAP, DKVMFSVMVEWFCKNMEMEKAIEFYMRMKSVRIAP, SSVLVHTMIQGCLKAESPEAALEIFNDSFES, HGFMCNKIFLLFCKQGKVDAATSFLKMMEQKGIEP, NVVFYNNMMLAHCRMKNMDLARSIFSEMLEKGLEP, NNFTYSILIDGFFKNKDEQNAWDVINQMNASNFEA, NEVIYNTIINGLCKVGQTSKAKEMLQNLIKEKRYSM, SCTSYNSIIDGFVKVGDTDSAVETYREMSENGKSP, NVVTFTSLINGFCKSNRMDLALEMTHEMKSMELKL, DLPAYGALIDGFCKKNDMKTAYTLFSELPELGLMP, NVSVYNSLISGFRNLGKMDAAIDLYKKMVNDGISC, DLFTYTTMIDGLLKDGNINLASDLYSELLDLGIVP, DEILHMVLVNGLSKKGQFLKASKMLEEMKKKDVTP, and NVLLYSTVIAGHHREGNLNEAFRLHDEMLEKGIVH.

It belongs to the PPR family. P subfamily. In terms of tissue distribution, expressed in lateral organ junctions and shoot apical meristem (SAM).

Its subcellular location is the mitochondrion. Its function is as follows. Involved in lateral organ development and boundary demarcation. This Arabidopsis thaliana (Mouse-ear cress) protein is Pentatricopeptide repeat-containing protein At2g39230, mitochondrial (LOJ).